Reading from the N-terminus, the 792-residue chain is E3 UFM1-protein ligase 1 (792 aa).

Residue Ala2 is modified to N-acetylalanine. Residues 2 to 200 form a mediates interaction with DDRGK1 region; that stretch reads ADAWEEIRRL…RGLFSAITRP (199 aa). Positions 2 to 212 are required for E3 UFM1-protein ligase activity; it reads ADAWEEIRRL…VNSLISRYGF (211 aa). Residues 121–250 are involved in CDK5RAP3-binding; that stretch reads DRLAEEVNDK…KAVFIPDIYS (130 aa). A mediates interaction with TRIP4 region spans residues 200–400; that stretch reads PTAVNSLISR…NPVHLITEED (201 aa). The disordered stretch occupies residues 412–471; it reads TSKKDKKDERRRKATEGSGSVRGGGGSNAREYKIKKTKKKGRKDDDSDDESSHTGKKKPE. Residue Arg433 is modified to Omega-N-methylarginine. Basic and acidic residues predominate over residues 453 to 471; that stretch reads RKDDDSDDESSHTGKKKPE. Ser458 bears the Phosphoserine mark. The mediates interaction with CDK5RAP3 stretch occupies residues 488–682; the sequence is LQDAPEEFIS…QLKVTEDPAL (195 aa). Thr534 is modified (phosphothreonine). Ser752 is modified (phosphoserine).

This sequence belongs to the UFL1 family. As to quaternary structure, catalytic component of the UFM1 ribosome E3 ligase (UREL) complex, composed of UFL1, DDRGK1 and CDK5RAP3. Interacts with E2-like enzyme UFC1. Interacts with RELA. Interacts with NBN; promoting recruitment to double-strand breaks following DNA damage. Interacts (when phosphorylated) with YWHAG/14-3-3-gamma; sequestering UFL1 and preventing its association with PDCD1/PD-1 substrate. Post-translationally, ubiquitinated, leading to its degradation by the proteasome. Interaction with CDK5RAP3 protects both proteins against ubiquitination and degradation via the proteasome. In terms of processing, phosphorylation at Thr-534 by AMPK promotes its interaction with YWHAG/14-3-3-gamma, thereby preventing UFL1 association with PDCD1/PD-1 substrate.

The protein localises to the endoplasmic reticulum membrane. It is found in the cytoplasm. Its subcellular location is the cytosol. The protein resides in the nucleus. It localises to the chromosome. E3 protein ligase that mediates ufmylation, the covalent attachment of the ubiquitin-like modifier UFM1 to lysine residues on target proteins, and which plays a key role in various processes, such as ribosome recycling, response to DNA damage, interferon response or reticulophagy (also called ER-phagy). Catalyzes ufmylation of many protein, such as CD274/PD-L1, CDK5RAP3, CYB5R3, DDRGK1, EIF6, histone H4, MRE11, P4HB, PDCD1/PD-1, TRIP4, RPN1, RPS20/uS10, RPL10/uL16, RPL26/uL24, SYVN1/HRD1 and TP53/p53. As part of the UREL complex, plays a key role in ribosome recycling by catalyzing mono-ufmylation of RPL26/uL24 subunit of the 60S ribosome. Ufmylation of RPL26/uL24 occurs on free 60S ribosomes following ribosome dissociation: it weakens the junction between post-termination 60S subunits and SEC61 translocons, promoting release and recycling of the large ribosomal subunit from the endoplasmic reticulum membrane. Ufmylation of RPL26/uL24 and subsequent 60S ribosome recycling either take place after normal termination of translation or after ribosome stalling during cotranslational translocation at the endoplasmic reticulum. Involved in reticulophagy in response to endoplasmic reticulum stress by mediating ufmylation of proteins such as CYB5R3 and RPN1, thereby promoting lysosomal degradation of ufmylated proteins. Ufmylation in response to endoplasmic reticulum stress is essential for processes such as hematopoiesis, blood vessel morphogenesis or inflammatory response. Regulates inflammation in response to endoplasmic reticulum stress by promoting reticulophagy, leading to inhibit the activity of the NF-kappa-B transcription factor. Mediates ufmylation of DDRGK1 and CDK5RAP3; the role of these modifications is however unclear: as both DDRGK1 and CDK5RAP3 act as substrate adapters for ufmylation, it is uncertain whether ufmylation of these proteins is, a collateral effect or is required for ufmylation. Acts as a negative regulator of T-cell activation by mediating ufmylation and stabilization of PDCD1/PD-1. Also involved in the response to DNA damage: recruited to double-strand break sites following DNA damage and mediates monoufmylation of histone H4 and ufmylation of MRE11. Mediates ufmylation of TP53/p53, promoting its stability. Catalyzes ufmylation of TRIP4, thereby playing a role in nuclear receptor-mediated transcription. Required for hematopoietic stem cell function and hematopoiesis. The polypeptide is E3 UFM1-protein ligase 1 (Bos taurus (Bovine)).